The following is a 932-amino-acid chain: GPI ethanolamine phosphate transferase 1 (932 aa).

Residues 1–8 lie on the Cytoplasmic side of the membrane; that stretch reads MISLNKKL. The chain crosses the membrane as a helical span at residues 9 to 29; sequence VLLVGVIFHVAFMWSIFDIYF. Residues 30–456 are Lumenal-facing; that stretch reads VSPLIHGMKH…TYNWLFLRTL (427 aa). 3 N-linked (GlcNAc...) asparagine glycosylation sites follow: asparagine 138, asparagine 202, and asparagine 360. The chain crosses the membrane as a helical span at residues 457 to 477; sequence VTIGFFGWIAVAFCSYLLAFV. The Cytoplasmic portion of the chain corresponds to 478–486; that stretch reads VQSDKPFTT. Residues 487 to 507 traverse the membrane as a helical segment; that stretch reads SLPLKGVAYVALAILSGFFVF. At 508–509 the chain is on the lumenal side; sequence QK. Residues 510-530 traverse the membrane as a helical segment; that stretch reads SPLHYHLYAVFPVVFWEAVLQ. Topologically, residues 531–551 are cytoplasmic; that stretch reads RRTAVAEGISILARRSTSKAP. Residues 552–572 traverse the membrane as a helical segment; that stretch reads ALAAILDIGLSLVLLEAIVYG. Over 573–577 the chain is Lumenal; that stretch reads YFHRE. A helical transmembrane segment spans residues 578–598; that stretch reads IFSVCFGLATLWPFVHNFTVA. At 599-603 the chain is on the cytoplasmic side; the sequence is KREWP. The helical transmembrane segment at 604 to 624 threads the bilayer; sequence TTLAWVVMCAIMSSFTLLEVV. Topologically, residues 625–627 are lumenal; sequence KVE. A helical membrane pass occupies residues 628-648; sequence SIEQILLSGALMLVIGLVFTI. At 649–653 the chain is on the cytoplasmic side; the sequence is HLQRK. Residues 654 to 674 form a helical membrane-spanning segment; it reads LALAASTVCVLFAQILLVVAT. Residues 675-696 are Lumenal-facing; it reads MYFTRESVESLTARNGLPLFSQ. Residues 697–717 traverse the membrane as a helical segment; sequence VGGWISLLLSLAVPFLHFLGS. The Cytoplasmic portion of the chain corresponds to 718–737; that stretch reads DAKDYRLRLLIIFLAFGPTF. A helical transmembrane segment spans residues 738–758; that stretch reads VILTISWEGFFYVCFFAILVI. Over 759 to 786 the chain is Lumenal; sequence WIELETQMRDARVTPQTRADLTPGDFRM. Residues 787–807 form a helical membrane-spanning segment; it reads ALFTFFMSQIGFFGIGNIASI. Residues 808-828 lie on the Cytoplasmic side of the membrane; it reads SSFSLDSVYRLIPVFDPFSMG. A helical transmembrane segment spans residues 829–849; that stretch reads ALLMFKILVPFAVLSACLGIL. At 850–859 the chain is on the lumenal side; sequence NLKLGVPPSA. A helical transmembrane segment spans residues 860–880; that stretch reads LFSMVLCVSDILTLNFFYLVV. The Cytoplasmic portion of the chain corresponds to 881-900; it reads DEGSWLDIGTGISHYCIASG. The chain crosses the membrane as a helical span at residues 901–921; the sequence is LSLFMMVLEYLSGVLVAGVTI. Residues 922–932 are Lumenal-facing; the sequence is APHVSKIKKDM.

The protein belongs to the PIGG/PIGN/PIGO family. PIGN subfamily.

It is found in the endoplasmic reticulum membrane. Its pathway is glycolipid biosynthesis; glycosylphosphatidylinositol-anchor biosynthesis. Ethanolamine phosphate transferase involved in glycosylphosphatidylinositol-anchor biosynthesis. Transfers ethanolamine phosphate to the first alpha-1,4-linked mannose of the glycosylphosphatidylinositol precursor of GPI-anchor. This is GPI ethanolamine phosphate transferase 1 (MCD4) from Yarrowia lipolytica (strain CLIB 122 / E 150) (Yeast).